The chain runs to 882 residues: Envelope glycoprotein gp160 (882 aa).

The N-terminal stretch at 1–22 (MGCLGNQLLIAILLLSVYGIYC) is a signal peptide. At 23–697 (IQYVTVFYGV…TSWIKYIQYG (675 aa)) the chain is on the extracellular side. An N-linked (GlcNAc...) asparagine; by host glycan is attached at N37. An intrachain disulfide couples C44 to C57. N-linked (GlcNAc...) asparagine; by host glycosylation is found at N70, N114, N149, N159, N174, N187, N201, N205, N215, N247, N250, N257, N281, N287, N298, N309, N319, N374, and N380. Disulfide bonds link C101/C223, C108/C214, C113/C171, C236/C266, and C246/C258. The segment at 113–170 (CNKSETDKWGLTKSSTTTASTTTTTTAKSVETRDIVNETSPCVVHDNCTGLEQEPMIS) is V1. The tract at residues 171–214 (CKFNMTGLKRDKKKEYNETWYSADLVCEQGNSTGNESRCYMNHC) is V2. The V3 stretch occupies residues 314–346 (CRRPGNKTVLPVTIMSALVFHSQPVNERPKQAW). C314 and C347 are disulfide-bonded. Intrachain disulfides connect C398-C462 and C405-C435. The interval 405–435 (CKMNWFLNWVEDRSLTTQKPKERHKRNYVPC) is V4. N-linked (GlcNAc...) asparagine; by host glycans are attached at residues N463, N474, and N479. Positions 478–485 (GNQTSITM) are V5. Positions 529-549 (GVFVLGFLGFLATAGSAMGAA) are fusion peptide. The tract at residues 592-608 (LQTRVSAIEKYLKDQAQ) is immunosuppression. N-linked (GlcNAc...) asparagine; by host glycosylation is found at N628, N637, and N653. The stretch at 637 to 669 (NETWQEWERKVDFLEANITALLEEAQIQQEKNM) forms a coiled coil. The MPER; binding to GalCer stretch occupies residues 674 to 695 (KLNSWDVFGNWFDLTSWIKYIQ). The helical transmembrane segment at 698-718 (IYIIVGVILLRIVIYIVQMLA) threads the bilayer. At 719–882 (RLRQGYRPVF…IRQGLELTLL (164 aa)) the chain is on the cytoplasmic side. Positions 724–727 (YRPV) match the YXXV motif; contains endocytosis signal motif. Residues 738 to 761 (THTQQDPALPTKEGKKGDGGGSGG) form a disordered region. A lipid anchor (S-palmitoyl cysteine; by host) is attached at C790. Positions 881 to 882 (LL) match the Di-leucine internalization motif motif.

As to quaternary structure, the mature envelope protein (Env) consists of a homotrimer of non-covalently associated gp120-gp41 heterodimers. The resulting complex protrudes from the virus surface as a spike. Interacts with host CD4 and CCR5. Gp120 also interacts with the C-type lectins CD209/DC-SIGN and CLEC4M/DC-SIGNR (collectively referred to as DC-SIGN(R)). The mature envelope protein (Env) consists of a homotrimer of non-covalently associated gp120-gp41 heterodimers. The resulting complex protrudes from the virus surface as a spike. Specific enzymatic cleavages in vivo yield mature proteins. Envelope glycoproteins are synthesized as an inactive precursor that is heavily N-glycosylated and processed likely by host cell furin in the Golgi to yield the mature SU and TM proteins. The cleavage site between SU and TM requires the minimal sequence [KR]-X-[KR]-R. In terms of processing, palmitoylation of the transmembrane protein and of Env polyprotein (prior to its proteolytic cleavage) is essential for their association with host cell membrane lipid rafts. Palmitoylation is therefore required for envelope trafficking to classical lipid rafts, but not for viral replication.

It localises to the virion membrane. It is found in the host cell membrane. Its subcellular location is the host endosome membrane. In terms of biological role, the surface protein gp120 (SU) attaches the virus to the host lymphoid cell by binding to the primary receptor CD4. This interaction induces a structural rearrangement creating a high affinity binding site for a chemokine coreceptor like CCR5. This peculiar 2 stage receptor-interaction strategy allows gp120 to maintain the highly conserved coreceptor-binding site in a cryptic conformation, protected from neutralizing antibodies. These changes are transmitted to the transmembrane protein gp41 and are thought to activate its fusogenic potential by unmasking its fusion peptide. Its function is as follows. Surface protein gp120 (SU) may target the virus to gut-associated lymphoid tissue (GALT) by binding host ITGA4/ITGB7 (alpha-4/beta-7 integrins), a complex that mediates T-cell migration to the GALT. Interaction between gp120 and ITGA4/ITGB7 would allow the virus to enter GALT early in the infection, infecting and killing most of GALT's resting CD4+ T-cells. This T-cell depletion is believed to be the major insult to the host immune system leading to AIDS. The surface protein gp120 is a ligand for CD209/DC-SIGN and CLEC4M/DC-SIGNR, which are respectively found on dendritic cells (DCs), and on endothelial cells of liver sinusoids and lymph node sinuses. These interactions allow capture of viral particles at mucosal surfaces by these cells and subsequent transmission to permissive cells. DCs are professional antigen presenting cells, critical for host immunity by inducing specific immune responses against a broad variety of pathogens. They act as sentinels in various tissues where they take up antigen, process it, and present it to T-cells following migration to lymphoid organs. SIV subverts the migration properties of dendritic cells to gain access to CD4+ T-cells in lymph nodes. Virus transmission to permissive T-cells occurs either in trans (without DCs infection, through viral capture and transmission), or in cis (following DCs productive infection, through the usual CD4-gp120 interaction), thereby inducing a robust infection. In trans infection, bound virions remain infectious over days and it is proposed that they are not degraded, but protected in non-lysosomal acidic organelles within the DCs close to the cell membrane thus contributing to the viral infectious potential during DCs' migration from the periphery to the lymphoid tissues. On arrival at lymphoid tissues, intact virions recycle back to DCs' cell surface allowing virus transmission to CD4+ T-cells. Virion capture also seems to lead to MHC-II-restricted viral antigen presentation, and probably to the activation of SIV-specific CD4+ cells. Functionally, the transmembrane protein gp41 (TM) acts as a class I viral fusion protein. Under the current model, the protein has at least 3 conformational states: pre-fusion native state, pre-hairpin intermediate state, and post-fusion hairpin state. During fusion of viral and target intracellular membranes, the coiled coil regions (heptad repeats) assume a trimer-of-hairpins structure, positioning the fusion peptide in close proximity to the C-terminal region of the ectodomain. The formation of this structure appears to drive apposition and subsequent fusion of viral and target cell membranes. Complete fusion occurs in host cell endosomes. The virus undergoes clathrin-dependent internalization long before endosomal fusion, thus minimizing the surface exposure of conserved viral epitopes during fusion and reducing the efficacy of inhibitors targeting these epitopes. Membranes fusion leads to delivery of the nucleocapsid into the cytoplasm. In terms of biological role, the envelope glycoprotein gp160 precursor down-modulates cell surface CD4 antigen by interacting with it in the endoplasmic reticulum and blocking its transport to the cell surface. Its function is as follows. The gp120-gp41 heterodimer allows rapid transcytosis of the virus through CD4 negative cells such as simple epithelial monolayers of the intestinal, rectal and endocervical epithelial barriers. Both gp120 and gp41 specifically recognize glycosphingolipids galactosyl-ceramide (GalCer) or 3' sulfo-galactosyl-ceramide (GalS) present in the lipid rafts structures of epithelial cells. Binding to these alternative receptors allows the rapid transcytosis of the virus through the epithelial cells. This transcytotic vesicle-mediated transport of virions from the apical side to the basolateral side of the epithelial cells does not involve infection of the cells themselves. In Simian immunodeficiency virus (isolate Mm142-83) (SIV-mac), this protein is Envelope glycoprotein gp160 (env).